The chain runs to 234 residues: Synaptogyrin-1 (234 aa).

Residue methionine 1 is modified to N-acetylmethionine. Topologically, residues 1–23 are cytoplasmic; it reads MEGGAYGAGKAGGAFDPYALVRQ. In terms of domain architecture, MARVEL spans 20–173; sequence LVRQPHTILR…QAVLAFQRYQ (154 aa). The chain crosses the membrane as a helical span at residues 24 to 44; it reads PHTILRVVSWLFSIVVFGSIV. Over 45-71 the chain is Lumenal; the sequence is NEGYLNSASEGEEFCIYNRNPNACSYG. The chain crosses the membrane as a helical span at residues 72–92; it reads VAVGVLAFLTCLLYLALDVYF. Over 93–103 the chain is Cytoplasmic; sequence PQISSVKDRKK. Residues 104-124 form a helical membrane-spanning segment; the sequence is AVLSDIGVSAFWAFLWFVGFC. The Lumenal portion of the chain corresponds to 125-148; the sequence is YLANQWQVSKPKDNPLNEGTDAAR. Residues 149-169 form a helical membrane-spanning segment; that stretch reads AAIAFSFFSIFTWAGQAVLAF. The Cytoplasmic segment spans residues 170–234; sequence QRYQIGADSA…EPQGYQSQGY (65 aa). The disordered stretch occupies residues 192-234; the sequence is SSMPYAPYVEPSTGPDPAGMGGTYQQPANTFDTEPQGYQSQGY. Residues 214 to 234 show a composition bias toward polar residues; sequence TYQQPANTFDTEPQGYQSQGY.

It belongs to the synaptogyrin family.

The protein localises to the cytoplasmic vesicle. Its subcellular location is the secretory vesicle. It is found in the synaptic vesicle membrane. It localises to the melanosome. May play a role in regulated exocytosis. Modulates the localization of synaptophysin/SYP into synaptic-like microvesicles and may therefore play a role in synaptic-like microvesicle formation and/or maturation. Involved in the regulation of short-term and long-term synaptic plasticity. In Pongo abelii (Sumatran orangutan), this protein is Synaptogyrin-1.